We begin with the raw amino-acid sequence, 244 residues long: Pyridoxal phosphate homeostasis protein (244 aa).

An N6-(pyridoxal phosphate)lysine modification is found at Lys37.

Belongs to the pyridoxal phosphate-binding protein YggS/PROSC family.

Its function is as follows. Pyridoxal 5'-phosphate (PLP)-binding protein, which may be involved in intracellular homeostatic regulation of pyridoxal 5'-phosphate (PLP), the active form of vitamin B6. This Caenorhabditis elegans protein is Pyridoxal phosphate homeostasis protein.